We begin with the raw amino-acid sequence, 183 residues long: Ubiquinol-cytochrome c reductase iron-sulfur subunit (183 aa).

Residues 21-41 form a helical membrane-spanning segment; that stretch reads LIYGTTAVGAVGVALAVWPFI. Positions 88-181 constitute a Rieske domain; the sequence is IVVARAVDPA…YAFTDDTTVL (94 aa). [2Fe-2S] cluster is bound by residues Cys121, His123, Cys145, and His148. Cysteines 126 and 147 form a disulfide.

The protein belongs to the Rieske iron-sulfur protein family. In terms of assembly, the main subunits of complex b-c1 are: cytochrome b, cytochrome c1 and the Rieske protein. Requires [2Fe-2S] cluster as cofactor.

It localises to the cell inner membrane. It catalyses the reaction a quinol + 2 Fe(III)-[cytochrome c](out) = a quinone + 2 Fe(II)-[cytochrome c](out) + 2 H(+)(out). Functionally, component of the ubiquinol-cytochrome c reductase complex (complex III or cytochrome b-c1 complex), which is a respiratory chain that generates an electrochemical potential coupled to ATP synthesis. The chain is Ubiquinol-cytochrome c reductase iron-sulfur subunit (petA) from Rhodospirillum rubrum.